The chain runs to 440 residues: MDGEMTASPPDISACDTSAVDEQTGQSGQSQAPIPKDIAYHTLTKALLFPDIDQYQHWHHVAPMLAKMLVDGKYSIHQQYEYLCLFAQLVAPVLGPYPSPGRDVYRCTLGGNMTVELSQNFQRSGSTTRIAFEPVRYQASVGHDRFNRTSVNAFFSQLQLLVKSVNIELHHLLSEHLTLTAKDERNLNEEQLTKYLTNFQVKTQYVVALDLRKTGIVAKEYFFPGIKCAATGQTGSNACFGAIRAVDKDGHLDSLCQLIEAHFQQSKIDDAFLCCDLVDPAHTRFKVYIADPLVTLARAEEHWTLGGRLTDEDAAVGLEIIRGLWSELGIIQGPLEPSAMMEKGLLPIMLNYEMKAGQRLPKPKLYMPLTGIPETKIARIMTAFFQRHDMPEQAEVFMENLQAYYEGKNLEEATRYQAWLSFAYTKEKGPYLSIYYFWPE.

Residues 1 to 33 (MDGEMTASPPDISACDTSAVDEQTGQSGQSQAP) form a disordered region. Positions 20–32 (VDEQTGQSGQSQA) are enriched in polar residues. The substrate site is built by Thr-108 and Glu-116. Residues Arg-129, Lys-219, and Tyr-221 each contribute to the dimethylallyl diphosphate site. Phe-223 provides a ligand contact to substrate. Residues Lys-286, Tyr-288, Tyr-366, Tyr-431, and Tyr-435 each coordinate dimethylallyl diphosphate.

The protein belongs to the tryptophan dimethylallyltransferase family.

The enzyme catalyses harmol + dimethylallyl diphosphate = 6-(3-dimethylallyl)harmol + diphosphate. It carries out the reaction an N-terminal L-tryptophanyl-L-alpha-aminoacyl-[peptide] + H2O = an N-terminal L-alpha-aminoacyl-[peptide] + L-tryptophan. The catalysed reaction is (R)-benzodiazepinedione + dimethylallyl diphosphate = (2S,3R,11R)-aszonalenin + diphosphate. It catalyses the reaction (S)-benzodiazepinedione + dimethylallyl diphosphate = (2S,3R,11S)-aszonalenin + diphosphate. Prenyltransferase that catalyzes reverse prenylation at position N-1 of tryptophan-containing cyclic dipeptides. Accepts only dimethylallyl diphosphate (DMAPP) as the prenyl donor but shows broad substrate specificities toward its aromatic substrates. Also shows tryptophan aminopeptidase activity with preference for linear peptides containing a tryptophanyl moiety at the N-terminus. The sequence is that of Cyclic dipeptide prenyltransferase from Aspergillus fumigatus (Neosartorya fumigata).